Reading from the N-terminus, the 268-residue chain is Malonyl-[acyl-carrier protein] O-methyltransferase (268 aa).

The protein belongs to the methyltransferase superfamily.

It catalyses the reaction malonyl-[ACP] + S-adenosyl-L-methionine = malonyl-[ACP] methyl ester + S-adenosyl-L-homocysteine. It participates in cofactor biosynthesis; biotin biosynthesis. Its function is as follows. Converts the free carboxyl group of a malonyl-thioester to its methyl ester by transfer of a methyl group from S-adenosyl-L-methionine (SAM). It allows to synthesize pimeloyl-ACP via the fatty acid synthetic pathway. The protein is Malonyl-[acyl-carrier protein] O-methyltransferase of Prosthecochloris aestuarii (strain DSM 271 / SK 413).